A 520-amino-acid polypeptide reads, in one-letter code: GMP synthase [glutamine-hydrolyzing] (520 aa).

The region spanning 12 to 205 (KIIVLDYGSQ…AISICGARGD (194 aa)) is the Glutamine amidotransferase type-1 domain. The active-site Nucleophile is cysteine 89. Active-site residues include histidine 179 and glutamate 181. Positions 206 to 395 (WSMDNFIDME…LGMPEEIVWR (190 aa)) constitute a GMPS ATP-PPase domain. ATP is bound at residue 233–239 (SGGVDSS).

In terms of assembly, homodimer.

It catalyses the reaction XMP + L-glutamine + ATP + H2O = GMP + L-glutamate + AMP + diphosphate + 2 H(+). It participates in purine metabolism; GMP biosynthesis; GMP from XMP (L-Gln route): step 1/1. In terms of biological role, catalyzes the synthesis of GMP from XMP. The polypeptide is GMP synthase [glutamine-hydrolyzing] (Streptococcus pyogenes serotype M1).